Here is a 102-residue protein sequence, read N- to C-terminus: Small ribosomal subunit protein uS10 (102 aa).

The protein belongs to the universal ribosomal protein uS10 family. As to quaternary structure, part of the 30S ribosomal subunit.

Its function is as follows. Involved in the binding of tRNA to the ribosomes. The chain is Small ribosomal subunit protein uS10 from Roseiflexus castenholzii (strain DSM 13941 / HLO8).